Reading from the N-terminus, the 364-residue chain is MEQNTDNVFNFSAGPAALPKPVMQQAQQELLNWQGLGTSVMEISHRSKEFIAVAEQSEQDLRDLLNIPDNYKVLFCQGGARAQFAAVPLNLLGDATTATYIDAGYWAESAVEEAKKYCQPDVFVAKAEKEGKQAVLPASEWQIHPDAAYVHFCPNETIDGIEINDLPVTDKPIVADMSSTILSREIDVSKYGVIYAGAQKNIGPSGIAIAIVRDDLLGLAKEVLPSILNYKVLAEQDSMFNTPPTFAWYLSGLVFKWLKAQGGVKAIEQVNREKAAILYNYIDESDFYINNVHPDNRSLMNVPFQMVKPELDAKFLKEAEALGLKSLKGHRVVGGMRASIYNAMPIEGVKALVDFMRQFEQENA.

R46 provides a ligand contact to L-glutamate. Pyridoxal 5'-phosphate contacts are provided by residues 80-81 (AR), W106, T157, D176, and Q199. K200 bears the N6-(pyridoxal phosphate)lysine mark. 241–242 (NT) contributes to the pyridoxal 5'-phosphate binding site.

Belongs to the class-V pyridoxal-phosphate-dependent aminotransferase family. SerC subfamily. In terms of assembly, homodimer. Pyridoxal 5'-phosphate serves as cofactor.

It is found in the cytoplasm. The enzyme catalyses O-phospho-L-serine + 2-oxoglutarate = 3-phosphooxypyruvate + L-glutamate. It carries out the reaction 4-(phosphooxy)-L-threonine + 2-oxoglutarate = (R)-3-hydroxy-2-oxo-4-phosphooxybutanoate + L-glutamate. Its pathway is amino-acid biosynthesis; L-serine biosynthesis; L-serine from 3-phospho-D-glycerate: step 2/3. It functions in the pathway cofactor biosynthesis; pyridoxine 5'-phosphate biosynthesis; pyridoxine 5'-phosphate from D-erythrose 4-phosphate: step 3/5. In terms of biological role, catalyzes the reversible conversion of 3-phosphohydroxypyruvate to phosphoserine and of 3-hydroxy-2-oxo-4-phosphonooxybutanoate to phosphohydroxythreonine. The polypeptide is Phosphoserine aminotransferase (Vibrio vulnificus (strain CMCP6)).